Here is a 479-residue protein sequence, read N- to C-terminus: MIQVLLVTICLAAFPYQGSSIILESGKVNDYEVVYPQRLAPLPEGAVQQKYEDTMQYEFKVNGEPVVLHLEKNKGLFSKDYSEIHYSPDGRRITTHPLVEDHCYYRGHIRNDADSTASISACHGLKGHFKLRGETYLIEPMKISNSEAHAVYKYENVEKEDEAHKMCGVTQNWESYEPIKKASQLIVSTEQQRYMEIVIVVDHSMVKKYNGDSDKIKAWVYEMINTITESYRYLYIDIILSGLEIWSEKDLINVETSAENTLKSFGEWRAKDLIHRISHDNAQLLTATDLDGPTIGLAYVASMCDPKRSVGIVQDHSSVNRLVAITLAHEMAHNLGVRHDEGSCSCGSGYTCIMSPVINPDAMKYFSDCSYIQCWDYIMKENPPCILNKPLRTDTVSTPVSGNELLEAGKDYDRDSSANPCYDAATCKLNQGAQCTAGPCCDQGRFKEEGTICRRARGDDLDDYCNGISADCPRNPYHA.

The signal sequence occupies residues 1–20 (MIQVLLVTICLAAFPYQGSS). A propeptide spanning residues 21-187 (IILESGKVND…PIKKASQLIV (167 aa)) is cleaved from the precursor. The region spanning 193-390 (RYMEIVIVVD…ENPPCILNKP (198 aa)) is the Peptidase M12B domain. Residues Glu196 and Asp280 each contribute to the Ca(2+) site. 3 cysteine pairs are disulfide-bonded: Cys304–Cys385, Cys344–Cys369, and Cys346–Cys352. His329 contacts Zn(2+). Glu330 is an active-site residue. Zn(2+) contacts are provided by His333 and His339. Ca(2+) is bound by residues Cys385 and Asn388. Positions 390 to 414 (PLRTDTVSTPVSGNELLEAGKDYDR) are excised as a propeptide. One can recognise a Disintegrin domain in the interval 398-479 (TPVSGNELLE…ADCPRNPYHA (82 aa)). 3 cysteine pairs are disulfide-bonded: Cys435–Cys441, Cys440–Cys465, and Cys453–Cys472. Positions 457–459 (RGD) match the Cell attachment site motif.

It belongs to the venom metalloproteinase (M12B) family. P-II subfamily. P-IIa sub-subfamily. Monomer. Zn(2+) serves as cofactor. In terms of tissue distribution, expressed by the venom gland.

It is found in the secreted. Snake venom metalloproteinase that impairs hemostasis in the envenomed animal. In terms of biological role, inhibits platelet aggregation induced by ADP, thrombin, platelet-activating factor and collagen. Acts by inhibiting fibrinogen interaction with platelet receptors GPIIb/GPIIIa (ITGA2B/ITGB3). This Deinagkistrodon acutus (Hundred-pace snake) protein is Zinc metalloproteinase/disintegrin.